The sequence spans 454 residues: Jacalin-related lectin 37 (454 aa).

A Jacalin-type lectin domain is found at 295–438; sequence SRFTPPRGIQ…LTALGVHFSP (144 aa).

The protein belongs to the jacalin lectin family.

The protein is Jacalin-related lectin 37 (JAL37) of Arabidopsis thaliana (Mouse-ear cress).